An 85-amino-acid chain; its full sequence is Large ribosomal subunit protein bL31B (85 aa).

The protein belongs to the bacterial ribosomal protein bL31 family. Type B subfamily. In terms of assembly, part of the 50S ribosomal subunit.

The protein is Large ribosomal subunit protein bL31B of Staphylococcus saprophyticus subsp. saprophyticus (strain ATCC 15305 / DSM 20229 / NCIMB 8711 / NCTC 7292 / S-41).